Consider the following 91-residue polypeptide: Small ribosomal subunit protein uS19 (91 aa).

It belongs to the universal ribosomal protein uS19 family.

Functionally, protein S19 forms a complex with S13 that binds strongly to the 16S ribosomal RNA. The sequence is that of Small ribosomal subunit protein uS19 from Lachnospira eligens (strain ATCC 27750 / DSM 3376 / VPI C15-48 / C15-B4) (Eubacterium eligens).